The primary structure comprises 25 residues: Antimicrobial peptide 3 (25 aa).

Skin.

It localises to the secreted. In terms of biological role, has antibacterial activity against Gram-positive bacterium S.aureus and Gram-negative bacterium E.coli, when in combination with XT1 and XT6. In Xenopus tropicalis (Western clawed frog), this protein is Antimicrobial peptide 3.